The chain runs to 277 residues: NH(3)-dependent NAD(+) synthetase (277 aa).

An ATP-binding site is contributed by 36–43 (GLSGGIDS). Mg(2+) is bound at residue Asp-42. Arg-118 serves as a coordination point for deamido-NAD(+). ATP is bound at residue Thr-138. Position 143 (Glu-143) interacts with Mg(2+). ATP-binding residues include Lys-167 and Ser-189.

It belongs to the NAD synthetase family. As to quaternary structure, homodimer.

It carries out the reaction deamido-NAD(+) + NH4(+) + ATP = AMP + diphosphate + NAD(+) + H(+). It functions in the pathway cofactor biosynthesis; NAD(+) biosynthesis; NAD(+) from deamido-NAD(+) (ammonia route): step 1/1. Its function is as follows. Catalyzes the ATP-dependent amidation of deamido-NAD to form NAD. Uses ammonia as a nitrogen source. This is NH(3)-dependent NAD(+) synthetase from Chlorobium phaeobacteroides (strain DSM 266 / SMG 266 / 2430).